A 590-amino-acid chain; its full sequence is MEKLSMVTSLLCAITVAVLAVAVVSGEAAVVEHTFVVHEMNATHLCNTTKIYVVNGQFPGPTVDVTEGDTVVVHVINKLPFGLTIHWHGVRQMRSCWADGAGFVTECPIPPGNEHTYRFNVTGQVGTLWWHAHVTCLRATINGAFIVRPRDGKYPFPTPAKDVPIIIGEWWELDLIELDRRMMDGNFDDNPLSATINGKLGDLSNCSRMVEESFILDVKHGESYLLRVINTALFSEYYFRVAGHTFTVVGADGNYLTPFKTDMVTVAPGEAIDVIMVADAPPAHYHMIALANQPPEPDPQIPVFTSRGLVRYAGTTANNNGLPVPMPIMPNQHNTMPSYYFHANLTGLAHPERHRVPMHVDERLFVTLGLGSICRGQNTTCKRRRSPETIVVATMNNVSFAHPKTTALLERYYDGTSKGVYTEDFPIRPPRPFNYTNRDLIPPGPLEEALEPTFKATKLKRFKYNTSVEIIFQSTTLMQSDSNPMHLHGYDVFLLAQGLGNFNAKRDVRKFNYHNPQLRNTVQVPRGGWAAIRFVTDNPGMWYLHCHFEFHIIMGMATAFIVEDGPTPETSLPPPPPEFKRCGNNGLSQP.

Residues 1–28 (MEKLSMVTSLLCAITVAVLAVAVVSGEA) form the signal peptide. Plastocyanin-like domains are found at residues 36–152 (VVHE…PRDG) and 161–315 (KDVP…YAGT). N-linked (GlcNAc...) asparagine glycans are attached at residues Asn-41 and Asn-47. The Cu cation site is built by His-86 and His-88. Asn-120 is a glycosylation site (N-linked (GlcNAc...) asparagine). Residues His-131 and His-133 each contribute to the Cu cation site. Residues Asn-205, Asn-344, Asn-378, Asn-397, Asn-434, and Asn-465 are each glycosylated (N-linked (GlcNAc...) asparagine). The Plastocyanin-like 3 domain occupies 424 to 566 (DFPIRPPRPF…ATAFIVEDGP (143 aa)). The Cu cation site is built by Asn-483, His-486, His-488, His-545, Cys-546, His-547, His-551, and Met-556. A disordered region spans residues 565 to 590 (GPTPETSLPPPPPEFKRCGNNGLSQP).

This sequence belongs to the multicopper oxidase family. It depends on Cu cation as a cofactor.

It is found in the secreted. The protein localises to the extracellular space. It localises to the apoplast. The enzyme catalyses 4 hydroquinone + O2 = 4 benzosemiquinone + 2 H2O. Lignin degradation and detoxification of lignin-derived products. In Oryza sativa subsp. japonica (Rice), this protein is Laccase-19 (LAC19).